Reading from the N-terminus, the 394-residue chain is MIISAASDYRAAAQRILPPFLFHYIDGGAYAEHTLRRNVEDLSDVALRQRILRNMSDLSLETTLFNEKLAMPTALAPVGLCGMYARRGEVQAAGAADDKGIPFTLSTVSVCPIEEVAPTIKRPMWFQLYVLRDRGFMRNALERAKAAGCSTLVFTVDMPTPGARYRDAHSGMSGPNAALRRYWQAVTHPQWAWDVGLNGRPHDLGNISAYLGKPTGLEDYIGWLANNFDPSISWKDLEWIRDFWDGPMVIKGILDPEDARDAVRFGADGIVVSNHGGRQLDGVLSSARALPAIADAVKGDITILADSGIRNGLDVVRMIALGADSVLLGRAYLYALATHGKQGVANLLNLIEKEMKVAMTLTGAKSIREISRDSLVQNAEALQTFDALKQNNAA.

In terms of domain architecture, FMN hydroxy acid dehydrogenase spans 1–380; the sequence is MIISAASDYR…SRDSLVQNAE (380 aa). Tyr-24 provides a ligand contact to substrate. FMN-binding residues include Ser-106 and Gln-127. A substrate-binding site is contributed by Tyr-129. Thr-155 serves as a coordination point for FMN. Arg-164 provides a ligand contact to substrate. Lys-251 is a binding site for FMN. His-275 acts as the Proton acceptor in catalysis. Arg-278 contributes to the substrate binding site. 306–330 serves as a coordination point for FMN; sequence DSGIRNGLDVVRMIALGADSVLLGR.

It belongs to the FMN-dependent alpha-hydroxy acid dehydrogenase family. Requires FMN as cofactor.

It localises to the cell inner membrane. It carries out the reaction (S)-lactate + A = pyruvate + AH2. Catalyzes the conversion of L-lactate to pyruvate. Is coupled to the respiratory chain. This Klebsiella pneumoniae subsp. pneumoniae (strain ATCC 700721 / MGH 78578) protein is L-lactate dehydrogenase.